A 116-amino-acid chain; its full sequence is uncharacterized protein (116 aa).

The Extracellular portion of the chain corresponds to 1-46 (MGDNTTVAPGTNQTLVEEDLGAQITHTLMVQIMSKLNEMLTEYQPQ). Residues N4 and N12 are each glycosylated (N-linked (GlcNAc...) asparagine; by host). A helical transmembrane segment spans residues 47-67 (IIGIGATVLAIFVIMFISLLI). At 68-116 (ILGCNCIRPYNFKNLKRYITGKASKSVEYQPLKMSAVNMGMDEDDEFLA) the chain is on the cytoplasmic side.

The protein localises to the host membrane. This is an uncharacterized protein from Magallana gigas (Pacific oyster).